We begin with the raw amino-acid sequence, 267 residues long: Undecaprenyl-diphosphatase (267 aa).

Helical transmembrane passes span 1-21 (MPLL…FLPV), 40-60 (GQAI…LFFW), 85-105 (LALG…FLYF), 112-132 (LRSV…LYIA), 188-208 (IAML…GTEV), 219-239 (DMGI…ALMM), and 245-265 (VSFT…LFIA).

Belongs to the UppP family.

The protein resides in the cell inner membrane. The catalysed reaction is di-trans,octa-cis-undecaprenyl diphosphate + H2O = di-trans,octa-cis-undecaprenyl phosphate + phosphate + H(+). Functionally, catalyzes the dephosphorylation of undecaprenyl diphosphate (UPP). Confers resistance to bacitracin. This chain is Undecaprenyl-diphosphatase, found in Ruegeria sp. (strain TM1040) (Silicibacter sp.).